We begin with the raw amino-acid sequence, 227 residues long: Cytochrome c oxidase subunit 2 (227 aa).

The Mitochondrial intermembrane portion of the chain corresponds to 1–14 (MAYPFQLGLQDATS). Residues 15-45 (PIMEELMNFHDHTLMIVFLISSLVLYIISLM) traverse the membrane as a helical segment. The Mitochondrial matrix portion of the chain corresponds to 46–59 (LTTKLTHTSTMDAQ). A helical membrane pass occupies residues 60 to 87 (EVETIWTILPAAILILIALPSLRILYMM). The Mitochondrial intermembrane portion of the chain corresponds to 88-227 (DEINNPALTV…YFENWSASMI (140 aa)). Residues His-161, Cys-196, Glu-198, Cys-200, His-204, and Met-207 each contribute to the Cu cation site. Residue Glu-198 participates in Mg(2+) binding. Tyr-218 carries the phosphotyrosine modification.

It belongs to the cytochrome c oxidase subunit 2 family. As to quaternary structure, component of the cytochrome c oxidase (complex IV, CIV), a multisubunit enzyme composed of 14 subunits. The complex is composed of a catalytic core of 3 subunits MT-CO1, MT-CO2 and MT-CO3, encoded in the mitochondrial DNA, and 11 supernumerary subunits COX4I, COX5A, COX5B, COX6A, COX6B, COX6C, COX7A, COX7B, COX7C, COX8 and NDUFA4, which are encoded in the nuclear genome. The complex exists as a monomer or a dimer and forms supercomplexes (SCs) in the inner mitochondrial membrane with NADH-ubiquinone oxidoreductase (complex I, CI) and ubiquinol-cytochrome c oxidoreductase (cytochrome b-c1 complex, complex III, CIII), resulting in different assemblies (supercomplex SCI(1)III(2)IV(1) and megacomplex MCI(2)III(2)IV(2)). Found in a complex with TMEM177, COA6, COX18, COX20, SCO1 and SCO2. Interacts with TMEM177 in a COX20-dependent manner. Interacts with COX20. Interacts with COX16. Cu cation serves as cofactor.

It is found in the mitochondrion inner membrane. It carries out the reaction 4 Fe(II)-[cytochrome c] + O2 + 8 H(+)(in) = 4 Fe(III)-[cytochrome c] + 2 H2O + 4 H(+)(out). Its function is as follows. Component of the cytochrome c oxidase, the last enzyme in the mitochondrial electron transport chain which drives oxidative phosphorylation. The respiratory chain contains 3 multisubunit complexes succinate dehydrogenase (complex II, CII), ubiquinol-cytochrome c oxidoreductase (cytochrome b-c1 complex, complex III, CIII) and cytochrome c oxidase (complex IV, CIV), that cooperate to transfer electrons derived from NADH and succinate to molecular oxygen, creating an electrochemical gradient over the inner membrane that drives transmembrane transport and the ATP synthase. Cytochrome c oxidase is the component of the respiratory chain that catalyzes the reduction of oxygen to water. Electrons originating from reduced cytochrome c in the intermembrane space (IMS) are transferred via the dinuclear copper A center (CU(A)) of subunit 2 and heme A of subunit 1 to the active site in subunit 1, a binuclear center (BNC) formed by heme A3 and copper B (CU(B)). The BNC reduces molecular oxygen to 2 water molecules using 4 electrons from cytochrome c in the IMS and 4 protons from the mitochondrial matrix. This is Cytochrome c oxidase subunit 2 (MT-CO2) from Lemniscomys barbarus (Barbary striped grass mouse).